A 419-amino-acid chain; its full sequence is Protein translocase subunit SecY (419 aa).

The next 10 membrane-spanning stretches (helical) occupy residues 19–39 (IMILIFARLGNYIPIPGITEV), 64–84 (VISILTLGLGPFFSASLAVQF), 113–133 (ILTVLFCIIESFFLSNSLRSF), 143–163 (FVVAAAVTTGSLVLVWLSEVI), 167–189 (GIGNGSSLLILIGNLSRFRFLIN), 202–222 (SNLYIIYIIITLVSMLIFSTL), 255–275 (FGQAGVVPIIFSSSILLFLTT), 299–319 (IFYFFTFLVLIIFFSFFYTLI), 359–379 (FVGSILLSALILIPSILAAAL), and 380–400 (GVHPLSISGITSLILSFSIIN).

It belongs to the SecY/SEC61-alpha family. In terms of assembly, component of the plastid Sec protein translocase complex, which is composed of at least SecY and SecE.

It is found in the plastid. Its subcellular location is the chloroplast thylakoid membrane. Functionally, the central subunit of the protein translocation channel SecYE. Consists of two halves formed by TMs 1-5 and 6-10. These two domains form a lateral gate at the front which open onto the bilayer between TMs 2 and 7, and are clamped together by SecE at the back. The channel is closed by both a pore ring composed of hydrophobic SecY resides and a short helix (helix 2A) on the extracellular side of the membrane which forms a plug. The sequence is that of Protein translocase subunit SecY from Diacronema lutheri (Unicellular marine alga).